Consider the following 71-residue polypeptide: Mitochondrial import protein 1 (71 aa).

The helical transmembrane segment at 22–44 (YAAINLGLPFLNGVMLGFGEIFA) threads the bilayer.

This sequence belongs to the MIM1 family. Component of the mitochondrial outer import machinery (MIM) complex containing at least mim1 and mim2. Interacts with mim2. Interacts with mitophagy receptor atg43.

The protein localises to the mitochondrion outer membrane. Functionally, component of the mitochondrial outer import machinery (MIM) complex that mediates transport of proteins into mitochondrial compartments. Promotes the insertion of tom70 into the outer mitochondrial membrane. Promotes the insertion of atg43 into the outer mitochondrial membrane. The MIM complex cooperates with the receptor tom70 in binding of precursor proteins and promotes their insertion and assembly into the outer membrane. Involved in import of the subset of proteins with multiple alpha-helical transmembrane segments. Required for the assembly of the TOM (translocase of outer membrane) receptor complex, which is responsible for the recognition and translocation of cytosolically synthesized mitochondrial preproteins. This is Mitochondrial import protein 1 from Schizosaccharomyces pombe (strain 972 / ATCC 24843) (Fission yeast).